We begin with the raw amino-acid sequence, 252 residues long: Tumor necrosis factor ligand superfamily member 15 (252 aa).

Over 1-39 (MAEELGLGFGEAVPVEMLPEGCRHRREARTGLAARSKAC) the chain is Cytoplasmic. The helical; Signal-anchor for type II membrane protein transmembrane segment at 40-60 (LALTCCLLSFPILAGLSTLLM) threads the bilayer. Over 61–252 (TGQLRIPGKD…DKTFFGAFLI (192 aa)) the chain is Extracellular. The THD domain occupies 96–252 (PKAHLTIMRQ…DKTFFGAFLI (157 aa)). Residue Asn-134 is glycosylated (N-linked (GlcNAc...) asparagine). Cys-163 and Cys-203 are disulfide-bonded. N-linked (GlcNAc...) asparagine glycosylation is present at Asn-230.

It belongs to the tumor necrosis factor family. As to quaternary structure, homotrimer.

The protein resides in the membrane. In terms of biological role, receptor for TNFRSF25 and TNFRSF6B. Mediates activation of NF-kappa-B. Inhibits vascular endothelial growth and angiogenesis (in vitro). Promotes activation of caspases and apoptosis. Promotes splenocyte alloactivation. In Rattus norvegicus (Rat), this protein is Tumor necrosis factor ligand superfamily member 15 (Tnfsf15).